We begin with the raw amino-acid sequence, 41 residues long: Large ribosomal subunit protein bL36 (41 aa).

The protein belongs to the bacterial ribosomal protein bL36 family.

The protein is Large ribosomal subunit protein bL36 of Gluconobacter oxydans (strain 621H) (Gluconobacter suboxydans).